The sequence spans 135 residues: Cytochrome b-c1 complex subunit 6, mitochondrial (135 aa).

The interval 1–70 is disordered; that stretch reads MSFFRDLLES…ETADPLDTLR (70 aa). Residues 19–64 are compositionally biased toward acidic residues; it reads EPVEDVEVEQPEDAPEEEVSEETVEEEEDDDEDDDEDDEEEEETAD.

It belongs to the UQCRH/QCR6 family. In terms of assembly, component of the ubiquinol-cytochrome c oxidoreductase (cytochrome b-c1 complex, complex III, CIII), a multisubunit enzyme composed of 10 subunits. The complex is composed of 3 respiratory subunits cytochrome b (COB), cytochrome c1 (CYT1) and Rieske protein (RIP1), 2 core protein subunits COR1 and QCR2, and 5 low-molecular weight protein subunits QCR6, QCR7, QCR8, QCR9 and QCR10. The complex exists as an obligatory dimer and forms supercomplexes (SCs) in the inner mitochondrial membrane with a monomer or a dimer of cytochrome c oxidase (complex IV, CIV), resulting in 2 different assemblies (supercomplexes III(2)IV and III(2)IV(2)).

Its subcellular location is the mitochondrion inner membrane. In terms of biological role, component of the ubiquinol-cytochrome c oxidoreductase, a multisubunit transmembrane complex that is part of the mitochondrial electron transport chain which drives oxidative phosphorylation. The complex plays an important role in the uptake of multiple carbon sources present in different host niches. The chain is Cytochrome b-c1 complex subunit 6, mitochondrial from Candida albicans (strain SC5314 / ATCC MYA-2876) (Yeast).